Here is a 256-residue protein sequence, read N- to C-terminus: Hypodermin-A (256 aa).

Positions 1–22 are cleaved as a signal peptide; it reads MLKFVILLCSIAYVFGAVVPLG. Residues 23 to 30 constitute a propeptide, activation peptide; it reads MLSQSDGR. Positions 31–254 constitute a Peptidase S1 domain; that stretch reads IVGGVESKIE…VRSLIVSNAE (224 aa). Cys56 and Cys72 are oxidised to a cystine. Catalysis depends on charge relay system residues His71 and Asp116. Disulfide bonds link Cys180/Cys197 and Cys206/Cys230. Ser210 serves as the catalytic Charge relay system.

It belongs to the peptidase S1 family.

The protein localises to the secreted. Functionally, specificity, limited to carboxyl side of arginine residue in B-chain of insulin. This is Hypodermin-A from Hypoderma lineatum (Early cattle grub).